Consider the following 213-residue polypeptide: dITP/XTP pyrophosphatase (213 aa).

A substrate-binding site is contributed by 7–12; sequence TSNLDK. Asp74 serves as the catalytic Proton acceptor. Position 74 (Asp74) interacts with Mg(2+). Substrate contacts are provided by residues Ser75, 165 to 168, Lys188, and 193 to 194; these read FGYD and HR.

It belongs to the HAM1 NTPase family. In terms of assembly, homodimer. It depends on Mg(2+) as a cofactor.

It catalyses the reaction XTP + H2O = XMP + diphosphate + H(+). The enzyme catalyses dITP + H2O = dIMP + diphosphate + H(+). It carries out the reaction ITP + H2O = IMP + diphosphate + H(+). Pyrophosphatase that catalyzes the hydrolysis of nucleoside triphosphates to their monophosphate derivatives, with a high preference for the non-canonical purine nucleotides XTP (xanthosine triphosphate), dITP (deoxyinosine triphosphate) and ITP. Seems to function as a house-cleaning enzyme that removes non-canonical purine nucleotides from the nucleotide pool, thus preventing their incorporation into DNA/RNA and avoiding chromosomal lesions. This Campylobacter concisus (strain 13826) protein is dITP/XTP pyrophosphatase.